A 62-amino-acid chain; its full sequence is Large ribosomal subunit protein bL28 (62 aa).

The protein belongs to the bacterial ribosomal protein bL28 family.

This Helicobacter hepaticus (strain ATCC 51449 / 3B1) protein is Large ribosomal subunit protein bL28.